The primary structure comprises 340 residues: uncharacterized protein (340 aa).

2 helical membrane-spanning segments follow: residues 162–182 (PLVP…VLAG) and 239–259 (FWIA…IVVP).

It is found in the cell membrane. This is an uncharacterized protein from Mycobacterium tuberculosis (strain CDC 1551 / Oshkosh).